A 220-amino-acid chain; its full sequence is Large ribosomal subunit protein uL3 (220 aa).

The tract at residues 126 to 158 (GFQGAIKRHGQSRGPMSHGSRYHRRPGSMGMAS) is disordered.

The protein belongs to the universal ribosomal protein uL3 family. In terms of assembly, part of the 50S ribosomal subunit. Forms a cluster with proteins L14 and L19.

Its function is as follows. One of the primary rRNA binding proteins, it binds directly near the 3'-end of the 23S rRNA, where it nucleates assembly of the 50S subunit. The polypeptide is Large ribosomal subunit protein uL3 (Macrococcus caseolyticus (strain JCSC5402) (Macrococcoides caseolyticum)).